The chain runs to 555 residues: Glutamine--tRNA ligase (555 aa).

The short motif at 34–44 (PEPNGYLHIGH) is the 'HIGH' region element. ATP-binding positions include 35–37 (EPN) and 41–47 (HIGHAKS). Asp67 and Tyr212 together coordinate L-glutamine. ATP is bound by residues Thr231, 261 to 262 (RL), and 269 to 271 (MSK). Residues 268–272 (IMSKR) carry the 'KMSKS' region motif.

The protein belongs to the class-I aminoacyl-tRNA synthetase family. As to quaternary structure, monomer.

It is found in the cytoplasm. The catalysed reaction is tRNA(Gln) + L-glutamine + ATP = L-glutaminyl-tRNA(Gln) + AMP + diphosphate. This is Glutamine--tRNA ligase from Yersinia enterocolitica serotype O:8 / biotype 1B (strain NCTC 13174 / 8081).